A 389-amino-acid chain; its full sequence is E3 ubiquitin-protein ligase E3D (389 aa).

Ala-2 is modified (N-acetylalanine). A BRAT1-like motif motif is present at residues 129–159; it reads PLPSENWGALVGEWCCHPDPFANKSLHPQEN. Zn(2+) is bound at residue Cys-144. The tract at residues 235–257 is interaction with UBE2C; it reads QSSERSFPIIPRSWFVQSVIAQC. The HECT-like stretch occupies residues 353-389; sequence LPSATCLELLLILSKSNANLPSSLRRVNSFQVAFLKM.

Interacts with UBE2C/UbcH10 (E2 ubiquitin-conjugating enzyme). In vitro, interacts with cyclin-B. Ubiquitinated by UBCH10 (E2 ubiquitin-conjugating enzyme).

It localises to the cytoplasm. It carries out the reaction S-ubiquitinyl-[E2 ubiquitin-conjugating enzyme]-L-cysteine + [acceptor protein]-L-lysine = [E2 ubiquitin-conjugating enzyme]-L-cysteine + N(6)-ubiquitinyl-[acceptor protein]-L-lysine.. It participates in protein modification; protein ubiquitination. In terms of biological role, E3 ubiquitin-protein ligase which accepts ubiquitin from specific E2 ubiquitin-conjugating enzymes, and transfers it to substrates, generally promoting their degradation by the proteasome. Independently of its E3 ubiquitin-protein ligase activity, acts as an inhibitor of CPSF3 endonuclease activity by blocking CPSF3 active site. The protein is E3 ubiquitin-protein ligase E3D (UBE3D) of Homo sapiens (Human).